The sequence spans 71 residues: MAKDAIKLRAKVLEAYSMDDYLVELENKQQIKAKISGKMRVNRIRILPGDLVDVELSSYDLTKGRITYRHK.

An S1-like domain is found at M1–K71.

This sequence belongs to the IF-1 family. Component of the 30S ribosomal translation pre-initiation complex which assembles on the 30S ribosome in the order IF-2 and IF-3, IF-1 and N-formylmethionyl-tRNA(fMet); mRNA recruitment can occur at any time during PIC assembly.

The protein resides in the cytoplasm. Its function is as follows. One of the essential components for the initiation of protein synthesis. Stabilizes the binding of IF-2 and IF-3 on the 30S subunit to which N-formylmethionyl-tRNA(fMet) subsequently binds. Helps modulate mRNA selection, yielding the 30S pre-initiation complex (PIC). Upon addition of the 50S ribosomal subunit IF-1, IF-2 and IF-3 are released leaving the mature 70S translation initiation complex. This Mycoplasmopsis synoviae (strain 53) (Mycoplasma synoviae) protein is Translation initiation factor IF-1.